The following is a 117-amino-acid chain: Large ribosomal subunit protein bL19 (117 aa).

It belongs to the bacterial ribosomal protein bL19 family.

Its function is as follows. This protein is located at the 30S-50S ribosomal subunit interface and may play a role in the structure and function of the aminoacyl-tRNA binding site. This chain is Large ribosomal subunit protein bL19, found in Desulfotalea psychrophila (strain LSv54 / DSM 12343).